A 31-amino-acid polypeptide reads, in one-letter code: Cytochrome b6-f complex subunit 6 (31 aa).

The chain crosses the membrane as a helical span at residues 4-24; the sequence is IISYFGLLLATLTFTIVLFVG.

Belongs to the PetL family. In terms of assembly, the 4 large subunits of the cytochrome b6-f complex are cytochrome b6, subunit IV (17 kDa polypeptide, PetD), cytochrome f and the Rieske protein, while the 4 small subunits are PetG, PetL, PetM and PetN. The complex functions as a dimer.

It is found in the plastid. It localises to the chloroplast thylakoid membrane. In terms of biological role, component of the cytochrome b6-f complex, which mediates electron transfer between photosystem II (PSII) and photosystem I (PSI), cyclic electron flow around PSI, and state transitions. PetL is important for photoautotrophic growth as well as for electron transfer efficiency and stability of the cytochrome b6-f complex. This chain is Cytochrome b6-f complex subunit 6, found in Staurastrum punctulatum (Green alga).